The following is a 514-amino-acid chain: Thymus-specific serine protease (514 aa).

An N-terminal signal peptide occupies residues 1-24 (MAVWLAQWLGPLLLVSLWGLLAPA). N-linked (GlcNAc...) asparagine glycans are attached at residues Asn-70 and Asn-172. The active-site Charge relay system is Ser-185. N-linked (GlcNAc...) asparagine glycosylation occurs at Asn-321. Catalysis depends on charge relay system residues Asp-447 and His-472.

This sequence belongs to the peptidase S28 family. As to expression, expressed predominantly in cortical thymic epithelial cells.

The protein localises to the cytoplasmic vesicle. In terms of biological role, protease that may play a role in T-cell development. This Homo sapiens (Human) protein is Thymus-specific serine protease (PRSS16).